We begin with the raw amino-acid sequence, 252 residues long: Imidazole glycerol phosphate synthase subunit HisF (252 aa).

Residues aspartate 11 and aspartate 130 contribute to the active site.

The protein belongs to the HisA/HisF family. Heterodimer of HisH and HisF.

It localises to the cytoplasm. The catalysed reaction is 5-[(5-phospho-1-deoxy-D-ribulos-1-ylimino)methylamino]-1-(5-phospho-beta-D-ribosyl)imidazole-4-carboxamide + L-glutamine = D-erythro-1-(imidazol-4-yl)glycerol 3-phosphate + 5-amino-1-(5-phospho-beta-D-ribosyl)imidazole-4-carboxamide + L-glutamate + H(+). Its pathway is amino-acid biosynthesis; L-histidine biosynthesis; L-histidine from 5-phospho-alpha-D-ribose 1-diphosphate: step 5/9. In terms of biological role, IGPS catalyzes the conversion of PRFAR and glutamine to IGP, AICAR and glutamate. The HisF subunit catalyzes the cyclization activity that produces IGP and AICAR from PRFAR using the ammonia provided by the HisH subunit. This Azoarcus sp. (strain BH72) protein is Imidazole glycerol phosphate synthase subunit HisF.